The following is a 158-amino-acid chain: NAD(P)H-quinone oxidoreductase subunit J, chloroplastic (158 aa).

The protein belongs to the complex I 30 kDa subunit family. As to quaternary structure, NDH is composed of at least 16 different subunits, 5 of which are encoded in the nucleus.

The protein resides in the plastid. It is found in the chloroplast thylakoid membrane. The catalysed reaction is a plastoquinone + NADH + (n+1) H(+)(in) = a plastoquinol + NAD(+) + n H(+)(out). It catalyses the reaction a plastoquinone + NADPH + (n+1) H(+)(in) = a plastoquinol + NADP(+) + n H(+)(out). In terms of biological role, NDH shuttles electrons from NAD(P)H:plastoquinone, via FMN and iron-sulfur (Fe-S) centers, to quinones in the photosynthetic chain and possibly in a chloroplast respiratory chain. The immediate electron acceptor for the enzyme in this species is believed to be plastoquinone. Couples the redox reaction to proton translocation, and thus conserves the redox energy in a proton gradient. This is NAD(P)H-quinone oxidoreductase subunit J, chloroplastic from Psilotum nudum (Whisk fern).